The chain runs to 268 residues: Putative sgc region protein SgcQ (268 aa).

This sequence belongs to the BtpA family.

The protein is Putative sgc region protein SgcQ (sgcQ) of Escherichia coli (strain K12).